We begin with the raw amino-acid sequence, 478 residues long: Zinc metalloproteinase/disintegrin (478 aa).

Positions 1–20 (MIQVLLVTICLAAFPYQGSS) are cleaved as a signal peptide. Residues 21 to 187 (IILESGNVND…PIKKASDLNL (167 aa)) constitute a propeptide that is removed on maturation. A Peptidase M12B domain is found at 193–389 (RYVELFIVVD…QKPQCILKKP (197 aa)). 3 cysteine pairs are disulfide-bonded: Cys304–Cys384, Cys344–Cys368, and Cys346–Cys351. A Zn(2+)-binding site is contributed by His329. The active site involves Glu330. Residues His333 and His339 each coordinate Zn(2+). The propeptide occupies 390-407 (LRTDTVSTPVSGNELLEA). The region spanning 397 to 478 (TPVSGNELLE…ADCPRNGLYG (82 aa)) is the Disintegrin domain. 6 disulfides stabilise this stretch: Cys411–Cys426, Cys413–Cys421, Cys420–Cys443, Cys434–Cys440, Cys439–Cys464, and Cys452–Cys471. The Cell attachment site; atypical (MVD) signature appears at 456–458 (MVD).

It belongs to the venom metalloproteinase (M12B) family. P-II subfamily. P-IIa sub-subfamily. In terms of assembly, monomer (disintegrin). Zn(2+) serves as cofactor. Expressed by the venom gland.

The protein resides in the secreted. It catalyses the reaction Cleavage of 3-Asn-|-Gln-4, 9-Ser-|-His-10 and 14-Ala-|-Leu-15 bonds in insulin B chain and 14-Tyr-|-Gln-15 and 8-Thr-|-Ser-9 in A chain. Cleaves type IV collagen at 73-Ala-|-Gln-74 in alpha1-(IV) and at 7-Gly-|-Leu-8 in alpha2-(IV).. In terms of biological role, snake venom zinc metalloproteinase that causes hemorrhage by provoking the degradation of the sub-endothelial matrix proteins (fibronectin, laminin, type IV collagen, nidogen, and gelatins). Potent inhibitor of both collagen- (IC(50)=4 nM) and ADP-induced (IC(50)=8 nM) platelet aggregation. May act by binding to the platelet receptor GPIIb/GPIIIa (ITGA2B/ITGB3). The chain is Zinc metalloproteinase/disintegrin from Crotalus atrox (Western diamondback rattlesnake).